We begin with the raw amino-acid sequence, 654 residues long: Protein fem-1 homolog A-A (654 aa).

ANK repeat units lie at residues 2-31, 40-70, 82-111, 115-145, 149-178, 182-211, and 214-243; these read DLHTAVYNAAHDGKLPLLQKLLAGRGREEL, GGGTPLLIAARRGHLDVVEYLVDHCGASVEA, EGAPPLWAASAAGHLAVVRSLLRRGASVNR, TNSTPLRAACFDGHLDVVRYLVGEHKADLEV, HGHTCLMISCYKGHREIARYLLERGAQVNR, KGNTALHDCAESGSLEILQLLLGCHARMER, and YGMTPLLAASVTGHTNIVEYLIQEQPGHEQ. Serine 108 is modified (phosphoserine). The tract at residues 242 to 265 is disordered; sequence EQLSGTELPGEGSSQVAGNHCSTP. Residues 253-263 are compositionally biased toward polar residues; the sequence is GSSQVAGNHCS. TPR repeat units lie at residues 283 to 317 and 375 to 408; these read VEALELLGATYVDKKRDLLGALKHWRRAMELRHQG and SYYIRYRGAVYADSGNFERCIRLWKYALDMQQNN. ANK repeat units follow at residues 519–561 and 565–594; these read NGFT…DPDS and DNNTPLHIAAQNNCPAIMDALIEAGAHMDA. Serine 608 is subject to Phosphoserine.

The protein belongs to the fem-1 family. In terms of assembly, component of a CRL2 E3 ubiquitin-protein ligase complex, also named ECS (Elongin BC-CUL2/5-SOCS-box protein) complex, composed of CUL2, Elongin BC (ELOB and ELOC), RBX1 and substrate-specific adapter FEM1A. Interacts with PTGER4. Interacts with NFKB1; the interaction is direct. Phosphorylated; highly phosphorylated in myoblasts and myotubes. Phosphorylation at Ser-108 and Ser-608 promote PGE2-EP4-mediated inhibition of inflammation. Dephosphorylated by protein phosphatase 2A (PP2A). In terms of tissue distribution, preferentially expressed in cardiac muscle, brain and liver (at protein level). Also expressed in skeletal muscle.

Its subcellular location is the mitochondrion. The protein resides in the cytoplasm. Its pathway is protein modification; protein ubiquitination. In terms of biological role, substrate-recognition component of a Cul2-RING (CRL2) E3 ubiquitin-protein ligase complex of the DesCEND (destruction via C-end degrons) pathway, which recognizes a C-degron located at the extreme C terminus of target proteins, leading to their ubiquitination and degradation. The C-degron recognized by the DesCEND pathway is usually a motif of less than ten residues and can be present in full-length proteins, truncated proteins or proteolytically cleaved forms. The CRL2(FEM1A) complex specifically recognizes proteins with an arginine at the C-terminus: recognizes and binds proteins ending with -Lys/Arg-Xaa-Arg and -Lys/Arg-Xaa-Xaa-Arg C-degrons, such as SIL1 or OR51B2, leading to their ubiquitination and degradation. Involved in PGE2-EP4-mediated inhibition of inflammation of macrophages via interaction with NFKB1 and PTGER4. Promotes inflammation in brain microglia through MAP2K4/MKK4-mediated signaling. The chain is Protein fem-1 homolog A-A from Mus musculus (Mouse).